The sequence spans 401 residues: 8-amino-7-oxononanoate synthase (401 aa).

R24 provides a ligand contact to substrate. 111-112 provides a ligand contact to pyridoxal 5'-phosphate; the sequence is GF. H137 contacts substrate. Positions 183, 211, and 240 each coordinate pyridoxal 5'-phosphate. K243 bears the N6-(pyridoxal phosphate)lysine mark. T357 provides a ligand contact to substrate.

This sequence belongs to the class-II pyridoxal-phosphate-dependent aminotransferase family. BioF subfamily. In terms of assembly, homodimer. Requires pyridoxal 5'-phosphate as cofactor.

It carries out the reaction 6-carboxyhexanoyl-[ACP] + L-alanine + H(+) = (8S)-8-amino-7-oxononanoate + holo-[ACP] + CO2. It functions in the pathway cofactor biosynthesis; biotin biosynthesis. Catalyzes the decarboxylative condensation of pimeloyl-[acyl-carrier protein] and L-alanine to produce 8-amino-7-oxononanoate (AON), [acyl-carrier protein], and carbon dioxide. The polypeptide is 8-amino-7-oxononanoate synthase (Xylella fastidiosa (strain 9a5c)).